The sequence spans 443 residues: D(2) dopamine receptor (443 aa).

Residues 1–37 (MDPLNLSWYDDDLESQNWSRPFNGSEGKPGKPHYNYY) lie on the Extracellular side of the membrane. N-linked (GlcNAc...) asparagine glycosylation is found at Asn5, Asn17, and Asn23. The chain crosses the membrane as a helical span at residues 38–60 (AMLLTLLIFIIVFGNVLVCMAVS). The Cytoplasmic portion of the chain corresponds to 61–70 (REKALQTTTN). The helical transmembrane segment at 71–93 (YLIVSLAVADLLVATLVMPWVVY) threads the bilayer. Residues 94–108 (LEVVGEWKFSRIHCD) lie on the Extracellular side of the membrane. A disulfide bridge links Cys107 with Cys182. Residues 109 to 130 (IFVTLDVMMCTASILNLCAISI) traverse the membrane as a helical segment. Residues 131 to 151 (DRYTAVAMPMLYNTRYSSKRR) are Cytoplasmic-facing. A helical membrane pass occupies residues 152–172 (VTVMIAIVWVLSFTISCPLLF). At 173–188 (GLNNTDQNECIIANPA) the chain is on the extracellular side. A helical membrane pass occupies residues 189 to 213 (FVVYSSIVSFYVPFIVTLLVYIKIY). The interaction with PPP1R9B stretch occupies residues 211-373 (KIYIVLRRRR…SQQKEKKATQ (163 aa)). The Cytoplasmic portion of the chain corresponds to 214–373 (IVLRRRRKRV…SQQKEKKATQ (160 aa)). The tract at residues 282–332 (EMLSSTSPPERTRYSPIPPSHHQLTLPDPSHHGLHSTADSPAKPEKNGHAK) is disordered. Residues 323 to 332 (AKPEKNGHAK) are compositionally biased toward basic and acidic residues. The helical transmembrane segment at 374–395 (MLAIVLGVFIICWLPFFITHIL) threads the bilayer. Topologically, residues 396-409 (NIHCECNIPPVLYS) are extracellular. Cys399 and Cys401 form a disulfide bridge. Residues 410 to 431 (AFTWLGYVNSAVNPIIYTTFNI) traverse the membrane as a helical segment. The Cytoplasmic portion of the chain corresponds to 432-443 (EFRKAFLKILHC). A lipid anchor (S-palmitoyl cysteine) is attached at Cys443.

This sequence belongs to the G-protein coupled receptor 1 family. Forms homo- and heterooligomers with DRD4. The interaction with DRD4 may modulate agonist-induced downstream signaling. Interacts with CADPS and CADPS2. Interacts with GPRASP1, PPP1R9B and CLIC6. Interacts with ARRB2. Interacts with HTR2A. Interacts with DRD1. Interacts with KCNA2. Palmitoylated. Palmitoylation which is required for proper localization to the plasma membrane and stability of the receptor could be carried on by ZDHHC4, ZDHHC3 and ZDHHC8.

It is found in the cell membrane. It localises to the golgi apparatus membrane. Its function is as follows. Dopamine receptor whose activity is mediated by G proteins which inhibit adenylyl cyclase. Positively regulates postnatal regression of retinal hyaloid vessels via suppression of VEGFR2/KDR activity, downstream of OPN5. The chain is D(2) dopamine receptor (DRD2) from Canis lupus familiaris (Dog).